Reading from the N-terminus, the 177-residue chain is ATP synthase subunit delta (177 aa).

Belongs to the ATPase delta chain family. In terms of assembly, F-type ATPases have 2 components, F(1) - the catalytic core - and F(0) - the membrane proton channel. F(1) has five subunits: alpha(3), beta(3), gamma(1), delta(1), epsilon(1). F(0) has three main subunits: a(1), b(2) and c(10-14). The alpha and beta chains form an alternating ring which encloses part of the gamma chain. F(1) is attached to F(0) by a central stalk formed by the gamma and epsilon chains, while a peripheral stalk is formed by the delta and b chains.

Its subcellular location is the cell inner membrane. Functionally, f(1)F(0) ATP synthase produces ATP from ADP in the presence of a proton or sodium gradient. F-type ATPases consist of two structural domains, F(1) containing the extramembraneous catalytic core and F(0) containing the membrane proton channel, linked together by a central stalk and a peripheral stalk. During catalysis, ATP synthesis in the catalytic domain of F(1) is coupled via a rotary mechanism of the central stalk subunits to proton translocation. In terms of biological role, this protein is part of the stalk that links CF(0) to CF(1). It either transmits conformational changes from CF(0) to CF(1) or is implicated in proton conduction. This chain is ATP synthase subunit delta, found in Shewanella loihica (strain ATCC BAA-1088 / PV-4).